The following is a 990-amino-acid chain: Presequence protease, mitochondrial (990 aa).

The N-terminal 25 residues, 1-25 (MLRLKSLKKPVQAVVRRFATTSAPT), are a transit peptide targeting the mitochondrion. H89 serves as a coordination point for Zn(2+). The active-site Proton acceptor is the E92. H93 contacts Zn(2+). The active site involves E165. E190 lines the Zn(2+) pocket.

It belongs to the peptidase M16 family. PreP subfamily. In terms of assembly, monomer and homodimer; homodimerization is induced by binding of the substrate. The cofactor is Zn(2+).

The protein localises to the mitochondrion intermembrane space. It localises to the mitochondrion matrix. Its function is as follows. Degrades mitochondrial transit peptides after their cleavage in the intermembrane space or in the matrix, and presequence peptides; clearance of these peptides is required to keep the presequence processing machinery running. Preferentially cleaves the N-terminal side of paired basic amino acid residues. Also degrades other unstructured peptides. May function as an ATP-dependent peptidase as opposed to a metalloendopeptidase. The protein is Presequence protease, mitochondrial (CYM1) of Yarrowia lipolytica (strain CLIB 122 / E 150) (Yeast).